Consider the following 738-residue polypeptide: Phosphoribosylformylglycinamidine synthase subunit PurL (738 aa).

His53 is a catalytic residue. Residues Tyr56 and Lys95 each contribute to the ATP site. Glu97 is a binding site for Mg(2+). Residues 98 to 101 (SHNH) and Arg120 contribute to the substrate site. His99 acts as the Proton acceptor in catalysis. Asp121 is a Mg(2+) binding site. Position 244 (Gln244) interacts with substrate. Asp274 lines the Mg(2+) pocket. 318–320 (ESQ) provides a ligand contact to substrate. ATP-binding residues include Asp499 and Gly536. Residue Asn537 participates in Mg(2+) binding. Ser539 serves as a coordination point for substrate.

It belongs to the FGAMS family. As to quaternary structure, monomer. Part of the FGAM synthase complex composed of 1 PurL, 1 PurQ and 2 PurS subunits.

It is found in the cytoplasm. It catalyses the reaction N(2)-formyl-N(1)-(5-phospho-beta-D-ribosyl)glycinamide + L-glutamine + ATP + H2O = 2-formamido-N(1)-(5-O-phospho-beta-D-ribosyl)acetamidine + L-glutamate + ADP + phosphate + H(+). The protein operates within purine metabolism; IMP biosynthesis via de novo pathway; 5-amino-1-(5-phospho-D-ribosyl)imidazole from N(2)-formyl-N(1)-(5-phospho-D-ribosyl)glycinamide: step 1/2. In terms of biological role, part of the phosphoribosylformylglycinamidine synthase complex involved in the purines biosynthetic pathway. Catalyzes the ATP-dependent conversion of formylglycinamide ribonucleotide (FGAR) and glutamine to yield formylglycinamidine ribonucleotide (FGAM) and glutamate. The FGAM synthase complex is composed of three subunits. PurQ produces an ammonia molecule by converting glutamine to glutamate. PurL transfers the ammonia molecule to FGAR to form FGAM in an ATP-dependent manner. PurS interacts with PurQ and PurL and is thought to assist in the transfer of the ammonia molecule from PurQ to PurL. The sequence is that of Phosphoribosylformylglycinamidine synthase subunit PurL from Lacticaseibacillus paracasei (strain ATCC 334 / BCRC 17002 / CCUG 31169 / CIP 107868 / KCTC 3260 / NRRL B-441) (Lactobacillus paracasei).